The primary structure comprises 255 residues: Reaction center protein L chain (255 aa).

3 helical membrane passes run 12-35 (GFFGVTTCLFASLGIALILLGTAL), 64-92 (GLWQLITICAIGRFCCWALRQVEIARKLG), and 95-120 (LHIPFAFSFAIFAYLALVVIRPLLLG). Residues His133 and His153 each coordinate (7R,8Z)-bacteriochlorophyll b. Residues 150-179 (NPAHMIGITFFFTNCMAFGMHGSIILSVLN) form a helical membrane-spanning segment. His170 lines the Fe cation pocket. Residue Phe196 coordinates a ubiquinone. A helical transmembrane segment spans residues 205 to 231 (GTLGIHRLGVFLAISAAFWSAVCIILS). Position 210 (His210) interacts with Fe cation.

Belongs to the reaction center PufL/M/PsbA/D family. Reaction center is composed of four bacteriochlorophylls, two bacteriopheophytins, two ubiquinones, one iron, and three highly hydrophobic polypeptide chains (designated L, M, and H).

It is found in the cellular chromatophore membrane. Functionally, the reaction center is a membrane-bound complex that mediates the initial photochemical event in the electron transfer process of photosynthesis. The polypeptide is Reaction center protein L chain (pufL) (Pararhodospirillum photometricum (Rhodospirillum photometricum)).